The following is a 196-amino-acid chain: Imidazole glycerol phosphate synthase subunit HisH (196 aa).

Residues 2–196 form the Glutamine amidotransferase type-1 domain; it reads NVVILDTGCA…AKLLKNFLEM (195 aa). Cysteine 77 acts as the Nucleophile in catalysis. Active-site residues include histidine 178 and glutamate 180.

In terms of assembly, heterodimer of HisH and HisF.

The protein localises to the cytoplasm. The enzyme catalyses 5-[(5-phospho-1-deoxy-D-ribulos-1-ylimino)methylamino]-1-(5-phospho-beta-D-ribosyl)imidazole-4-carboxamide + L-glutamine = D-erythro-1-(imidazol-4-yl)glycerol 3-phosphate + 5-amino-1-(5-phospho-beta-D-ribosyl)imidazole-4-carboxamide + L-glutamate + H(+). It carries out the reaction L-glutamine + H2O = L-glutamate + NH4(+). It participates in amino-acid biosynthesis; L-histidine biosynthesis; L-histidine from 5-phospho-alpha-D-ribose 1-diphosphate: step 5/9. In terms of biological role, IGPS catalyzes the conversion of PRFAR and glutamine to IGP, AICAR and glutamate. The HisH subunit catalyzes the hydrolysis of glutamine to glutamate and ammonia as part of the synthesis of IGP and AICAR. The resulting ammonia molecule is channeled to the active site of HisF. This is Imidazole glycerol phosphate synthase subunit HisH from Shigella dysenteriae serotype 1 (strain Sd197).